A 230-amino-acid chain; its full sequence is Small ribosomal subunit protein uS3 (230 aa).

The KH type-2 domain maps to 39–107; sequence VRNYLRQKLA…PVHVNIEEIR (69 aa). The disordered stretch occupies residues 210–230; the sequence is SSKPEHESKQRKAGRRNAAAN.

It belongs to the universal ribosomal protein uS3 family. As to quaternary structure, part of the 30S ribosomal subunit. Forms a tight complex with proteins S10 and S14.

Functionally, binds the lower part of the 30S subunit head. Binds mRNA in the 70S ribosome, positioning it for translation. This chain is Small ribosomal subunit protein uS3, found in Neisseria meningitidis serogroup C (strain 053442).